The sequence spans 634 residues: Sodium-dependent neutral amino acid transporter B(0)AT1 (634 aa).

At 1–41 (MVRLVLPNPGLEDRIPSLDELEVIEKEEASSRPKWDNKAQY) the chain is on the cytoplasmic side. Ser-17 carries the phosphoserine modification. The helical transmembrane segment at 42–62 (MLTCVGFCVGLGNVWRFPYLC) threads the bilayer. Over 63–65 (QSH) the chain is Extracellular. The chain crosses the membrane as a helical span at residues 66–86 (GGGAFMIPFLILLVLEGIPLL). Residues 87-119 (HLEFAIGQRLRKGSVGVWSSIHPALKGVGIASM) are Cytoplasmic-facing. Residues 120–140 (FVSFMVGLYYNTIIAWVMWYF) traverse the membrane as a helical segment. At 141-192 (FNSFQEPLPWSECPLNQNQTGYVEECAKSSSVDYFWYRETLNISTSISDSGS) the chain is on the extracellular side. Asn-158 and Asn-182 each carry an N-linked (GlcNAc...) asparagine glycan. A helical transmembrane segment spans residues 193–213 (IQWWILLCLTCAWSVLYVCTI). Over 214-221 (RGIETTGK) the chain is Cytoplasmic. Residues 222-242 (AVYITSTLPYVVLTIFLIRGL) form a helical membrane-spanning segment. Over 243–268 (TLKGATNGIVFLFTPNITELSNPNTW) the chain is Extracellular. Asn-258 is a glycosylation site (N-linked (GlcNAc...) asparagine). The helical transmembrane segment at 269–289 (LDAGAQVFYSFSLAFGGLISF) threads the bilayer. The Cytoplasmic segment spans residues 290–304 (SSYNSVHNNCEMDSV). Residues 305 to 325 (IVSIINGFTSVYAATVVYSII) form a helical membrane-spanning segment. Residues 326-413 (GFRATERFDD…TEAITKMPVS (88 aa)) are Extracellular-facing. 2 N-linked (GlcNAc...) asparagine glycosylation sites follow: Asn-354 and Asn-368. Residues 414-434 (PLWSVLFFIMLFCLGLSSMFG) form a helical membrane-spanning segment. The Cytoplasmic segment spans residues 435-456 (NMEGVVVPLQDLNITPKKWPKE). The helical transmembrane segment at 457–477 (LLTGLICLGTYLIAFIFTLNS) threads the bilayer. The Extracellular portion of the chain corresponds to 478–490 (GQYWLSLLDSYAG). A helical membrane pass occupies residues 491 to 511 (SIPLLIIAFCEMFAVVYVYGV). Topologically, residues 512–531 (DRFNKDIEFMIGHKPNIFWQ) are cytoplasmic. The chain crosses the membrane as a helical span at residues 532–552 (VTWRVVSPLIMLVIFLFFFVI). Over 553–581 (EVNKQLMYSVWDPDYEEFPKSQKVPYPDW) the chain is Extracellular. Residues 582-602 (VYAVVVIVAGVPCLTIPCFAI) traverse the membrane as a helical segment. The Cytoplasmic segment spans residues 603-634 (YKLIRNYCQKSGDQHGLVNALSTASVNGDLKN). Position 627 is a phosphoserine (Ser-627).

This sequence belongs to the sodium:neurotransmitter symporter (SNF) (TC 2.A.22) family. SLC6A19 subfamily. Interacts in a tissue-specific manner with ACE2 in small intestine and with CLTRN in the kidney. Interacts with CLTRN; this interaction is required for trafficking of SLC6A19 to the plasma membrane and for its catalytic activation in kidneys. Interacts with ACE2; this interaction is required for trafficking of SLC6A19 to the plasma membrane and for its catalytic activation in intestine. Interacts with ANPEP; the interaction positively regulates its amino acid transporter activity.

The protein resides in the membrane. It catalyses the reaction L-alanine(in) + Na(+)(in) = L-alanine(out) + Na(+)(out). It carries out the reaction L-cysteine(in) + Na(+)(in) = L-cysteine(out) + Na(+)(out). The catalysed reaction is L-glutamine(in) + Na(+)(in) = L-glutamine(out) + Na(+)(out). The enzyme catalyses glycine(in) + Na(+)(in) = glycine(out) + Na(+)(out). It catalyses the reaction L-isoleucine(in) + Na(+)(in) = L-isoleucine(out) + Na(+)(out). It carries out the reaction L-leucine(in) + Na(+)(in) = L-leucine(out) + Na(+)(out). The catalysed reaction is L-methionine(in) + Na(+)(in) = L-methionine(out) + Na(+)(out). The enzyme catalyses L-phenylalanine(in) + Na(+)(in) = L-phenylalanine(out) + Na(+)(out). It catalyses the reaction L-serine(in) + Na(+)(in) = L-serine(out) + Na(+)(out). It carries out the reaction L-tryptophan(in) + Na(+)(in) = L-tryptophan(out) + Na(+)(out). The catalysed reaction is L-tyrosine(in) + Na(+)(in) = L-tyrosine(out) + Na(+)(out). The enzyme catalyses L-valine(in) + Na(+)(in) = L-valine(out) + Na(+)(out). In terms of biological role, transporter that mediates resorption of neutral amino acids across the apical membrane of renal and intestinal epithelial cells. This uptake is sodium-dependent and chloride-independent. Requires CLTRN in kidney or ACE2 in intestine for cell surface expression and amino acid transporter activity. This Rattus norvegicus (Rat) protein is Sodium-dependent neutral amino acid transporter B(0)AT1.